The chain runs to 119 residues: Large ribosomal subunit protein uL18 (119 aa).

It belongs to the universal ribosomal protein uL18 family. As to quaternary structure, part of the 50S ribosomal subunit; part of the 5S rRNA/L5/L18/L25 subcomplex. Contacts the 5S and 23S rRNAs.

Functionally, this is one of the proteins that bind and probably mediate the attachment of the 5S RNA into the large ribosomal subunit, where it forms part of the central protuberance. The chain is Large ribosomal subunit protein uL18 from Clostridium tetani (strain Massachusetts / E88).